A 209-amino-acid chain; its full sequence is Ribosomal RNA large subunit methyltransferase E (209 aa).

Glycine 63, tryptophan 65, aspartate 83, aspartate 99, and aspartate 124 together coordinate S-adenosyl-L-methionine. The active-site Proton acceptor is lysine 164.

It belongs to the class I-like SAM-binding methyltransferase superfamily. RNA methyltransferase RlmE family.

It localises to the cytoplasm. It catalyses the reaction uridine(2552) in 23S rRNA + S-adenosyl-L-methionine = 2'-O-methyluridine(2552) in 23S rRNA + S-adenosyl-L-homocysteine + H(+). Specifically methylates the uridine in position 2552 of 23S rRNA at the 2'-O position of the ribose in the fully assembled 50S ribosomal subunit. In Tolumonas auensis (strain DSM 9187 / NBRC 110442 / TA 4), this protein is Ribosomal RNA large subunit methyltransferase E.